An 848-amino-acid chain; its full sequence is Translation initiation factor IF-2 (848 aa).

The disordered stretch occupies residues 1-265 (MSDTDGKKPL…GNQRAEKQVR (265 aa)). Basic and acidic residues predominate over residues 89–162 (KAREVEEAAQ…AEIAKPKTEA (74 aa)). Low complexity predominate over residues 163–179 (RPATPADRAAAEAAAVR). Residues 191–219 (RKTDRDRDTRGGGGDDRDSRNKGRDDSRR) show a composition bias toward basic and acidic residues. The tr-type G domain occupies 346-514 (PRAPIITIMG…AIALQAEILE (169 aa)). The tract at residues 355–362 (GHVDHGKT) is G1. GTP is bound at residue 355–362 (GHVDHGKT). The interval 380–384 (GITQH) is G2. The G3 stretch occupies residues 402-405 (DTPG). Residues 402-406 (DTPGH) and 456-459 (NKID) contribute to the GTP site. The tract at residues 456-459 (NKID) is G4. Positions 492-494 (SAK) are G5.

Belongs to the TRAFAC class translation factor GTPase superfamily. Classic translation factor GTPase family. IF-2 subfamily.

It is found in the cytoplasm. Its function is as follows. One of the essential components for the initiation of protein synthesis. Protects formylmethionyl-tRNA from spontaneous hydrolysis and promotes its binding to the 30S ribosomal subunits. Also involved in the hydrolysis of GTP during the formation of the 70S ribosomal complex. This is Translation initiation factor IF-2 from Paracoccus denitrificans (strain Pd 1222).